The primary structure comprises 125 residues: Protein U2 (125 aa).

This sequence belongs to the nanovirus U2 protein family.

The chain is Protein U2 (DNA-U2) from Milk vetch dwarf virus (isolate N) (MDV).